Here is a 288-residue protein sequence, read N- to C-terminus: Protein sprouty homolog 3 (288 aa).

The SPR domain occupies 154–260 (KCVPCTAARP…GYDSLRRPGC (107 aa)).

Belongs to the sprouty family. Interacts with TESK1. Interacts with USP11. Interacts with CAV1 (via C-terminus). Widely expressed; particularly in the fetal tissues. Expressed in the brain with expression the highest in Purkinje cells in the cerebellum (at protein level). Expressed in the myocardium of the heart.

It localises to the cytoplasm. Functionally, inhibits neurite branching, arbor length and neurite complexity. Inhibits EGF-mediated p42/44 ERK signaling. Negatively regulates the MAPK cascade, resulting in a reduction of extracellular matrix protein accumulation. May function as an antagonist of fibroblast growth factor (FGF) pathways and may negatively modulate respiratory organogenesis. The chain is Protein sprouty homolog 3 from Homo sapiens (Human).